Here is a 363-residue protein sequence, read N- to C-terminus: Aminomethyltransferase (363 aa).

It belongs to the GcvT family. As to quaternary structure, the glycine cleavage system is composed of four proteins: P, T, L and H.

The enzyme catalyses N(6)-[(R)-S(8)-aminomethyldihydrolipoyl]-L-lysyl-[protein] + (6S)-5,6,7,8-tetrahydrofolate = N(6)-[(R)-dihydrolipoyl]-L-lysyl-[protein] + (6R)-5,10-methylene-5,6,7,8-tetrahydrofolate + NH4(+). Functionally, the glycine cleavage system catalyzes the degradation of glycine. The polypeptide is Aminomethyltransferase (Staphylococcus saprophyticus subsp. saprophyticus (strain ATCC 15305 / DSM 20229 / NCIMB 8711 / NCTC 7292 / S-41)).